Here is a 258-residue protein sequence, read N- to C-terminus: Imidazole glycerol phosphate synthase subunit HisF (258 aa).

Active-site residues include Asp11 and Asp130.

The protein belongs to the HisA/HisF family. Heterodimer of HisH and HisF.

It localises to the cytoplasm. It carries out the reaction 5-[(5-phospho-1-deoxy-D-ribulos-1-ylimino)methylamino]-1-(5-phospho-beta-D-ribosyl)imidazole-4-carboxamide + L-glutamine = D-erythro-1-(imidazol-4-yl)glycerol 3-phosphate + 5-amino-1-(5-phospho-beta-D-ribosyl)imidazole-4-carboxamide + L-glutamate + H(+). Its pathway is amino-acid biosynthesis; L-histidine biosynthesis; L-histidine from 5-phospho-alpha-D-ribose 1-diphosphate: step 5/9. In terms of biological role, IGPS catalyzes the conversion of PRFAR and glutamine to IGP, AICAR and glutamate. The HisF subunit catalyzes the cyclization activity that produces IGP and AICAR from PRFAR using the ammonia provided by the HisH subunit. The polypeptide is Imidazole glycerol phosphate synthase subunit HisF (Enterobacter sp. (strain 638)).